Here is a 316-residue protein sequence, read N- to C-terminus: Elongation factor Ts, mitochondrial (316 aa).

Residues 1-18 (MFARAPFVRLLSTTSRNL) constitute a mitochondrion transit peptide. The tract at residues 245–269 (EAAESVKTQEGLRSQEGHDPNADPV) is disordered.

Belongs to the EF-Ts family.

It is found in the mitochondrion. Functionally, associates with the EF-Tu.GDP complex and induces the exchange of GDP to GTP. It remains bound to the aminoacyl-tRNA.EF-Tu.GTP complex up to the GTP hydrolysis stage on the ribosome. In Caenorhabditis elegans, this protein is Elongation factor Ts, mitochondrial.